The following is a 465-amino-acid chain: MREIVTITASHRANHLITQFFNGQERALHERDEQAGSDPSVFLHGTIDADGRTMSYEPRAVLWDAKGGSGALGRFQYWSQDDYADEEEPPRAAPGIEVVQTAARVRRSAYQRALDAGEAPPALTAAGARYWSDYGRMIYGQDSVQELAHWHHDVAAPSAPDFEALGQRRFDRYENGYEVFTEECARDFFDISLHRQLEQCDTLQGFNLVTETDNGWGGFMAALQEQLREEVPKVCYFGWGLNVDESGPRHPPRAGFQRQSNKLRATLAMLEQSDLYFPIRSEAADSLWEAGGWACHVLDSVNSAMCLEKSRTLRFMNQLADRLHSGDEQRNVVSLMSSGQRSYSYFADAPRHRSSRGDPHTFSRCRLLRGSHSPPETTLSVENLELIRTYAWRPADTIPETARNLHHIDLGVTEKCRDVFKNWYEMVAKQFRYDPDREELKERLGTLGAAYECGWYSDDDSGDDT.

Belongs to the misato family.

Its subcellular location is the mitochondrion. Functionally, involved in the partitioning of the mitochondrial organelle and mitochondrial DNA (mtDNA) inheritance. This is Protein DML1 (DML1) from Eremothecium gossypii (strain ATCC 10895 / CBS 109.51 / FGSC 9923 / NRRL Y-1056) (Yeast).